A 429-amino-acid chain; its full sequence is Multifunctional CCA protein (429 aa).

Residues Gly-27 and Arg-30 each contribute to the ATP site. Residues Gly-27 and Arg-30 each coordinate CTP. Positions 40 and 42 each coordinate Mg(2+). The ATP site is built by Arg-110, Arg-162, and Arg-165. Residues Arg-110, Arg-162, and Arg-165 each coordinate CTP. Residues 251 to 352 (TGVHTMMVVD…VRLLERCDAL (102 aa)) form the HD domain.

Belongs to the tRNA nucleotidyltransferase/poly(A) polymerase family. Bacterial CCA-adding enzyme type 1 subfamily. Monomer. Can also form homodimers and oligomers. Requires Mg(2+) as cofactor. The cofactor is Ni(2+).

The catalysed reaction is a tRNA precursor + 2 CTP + ATP = a tRNA with a 3' CCA end + 3 diphosphate. It catalyses the reaction a tRNA with a 3' CCA end + 2 CTP + ATP = a tRNA with a 3' CCACCA end + 3 diphosphate. In terms of biological role, catalyzes the addition and repair of the essential 3'-terminal CCA sequence in tRNAs without using a nucleic acid template. Adds these three nucleotides in the order of C, C, and A to the tRNA nucleotide-73, using CTP and ATP as substrates and producing inorganic pyrophosphate. tRNA 3'-terminal CCA addition is required both for tRNA processing and repair. Also involved in tRNA surveillance by mediating tandem CCA addition to generate a CCACCA at the 3' terminus of unstable tRNAs. While stable tRNAs receive only 3'-terminal CCA, unstable tRNAs are marked with CCACCA and rapidly degraded. The protein is Multifunctional CCA protein of Ralstonia nicotianae (strain ATCC BAA-1114 / GMI1000) (Ralstonia solanacearum).